We begin with the raw amino-acid sequence, 2136 residues long: Protein Ycf2 (2136 aa).

1404 to 1411 (GPIETGRS) lines the ATP pocket.

Belongs to the Ycf2 family.

The protein resides in the plastid. It localises to the chloroplast stroma. In terms of biological role, probable ATPase of unknown function. Its presence in a non-photosynthetic plant (Epifagus virginiana) and experiments in tobacco indicate that it has an essential function which is probably not related to photosynthesis. This is Protein Ycf2 from Marchantia polymorpha (Common liverwort).